Reading from the N-terminus, the 425-residue chain is Xylose isomerase (425 aa).

Active-site residues include histidine 101 and aspartate 104. 7 residues coordinate Mg(2+): glutamate 232, glutamate 268, histidine 271, aspartate 296, aspartate 307, aspartate 309, and aspartate 339.

Belongs to the xylose isomerase family. Homotetramer. It depends on Mg(2+) as a cofactor.

The protein resides in the cytoplasm. The catalysed reaction is alpha-D-xylose = alpha-D-xylulofuranose. This Salmonella paratyphi A (strain ATCC 9150 / SARB42) protein is Xylose isomerase.